Here is a 143-residue protein sequence, read N- to C-terminus: Type II secretion system core protein G (143 aa).

A propeptide spans 1-8 (leader sequence); that stretch reads MQKRRQSG. Phenylalanine 9 bears the N-methylphenylalanine mark. Residues 9–29 traverse the membrane as a helical segment; sequence FTLLEVMVVIVILGILASLVV. Residues 70-92 are disordered; the sequence is QGLDALVNKPTAAPEPRSYRDGG.

Belongs to the GSP G family. As to quaternary structure, type II secretion system is composed of four main components: the outer membrane complex, the inner membrane complex, the cytoplasmic secretion ATPase and the periplasm-spanning pseudopilus. Forms homomultimers. Post-translationally, cleaved by the prepilin peptidase. In terms of processing, methylated by prepilin peptidase at the amino group of the N-terminal phenylalanine once the leader sequence is cleaved.

The protein localises to the cell inner membrane. Functionally, core component of the type II secretion system required for the energy-dependent secretion of extracellular factors such as proteases and toxins from the periplasm. Pseudopilin (pilin-like) protein that polymerizes to form the pseudopilus. Further polymerization triggers pseudopilus growth. In Aeromonas hydrophila, this protein is Type II secretion system core protein G (exeG).